The sequence spans 75 residues: Toxin-like peptide AaF1CA7 (75 aa).

Positions 1-22 (MMKLMLFSIIVILFSLIGSIHG) are cleaved as a signal peptide. The 51-residue stretch at 25-75 (VPGNYPLDSSDDTYLCAPLGENPSCIQICRKHGVKYGYCYAFQCWCEYFGR) folds into the LCN-type CS-alpha/beta domain. Disulfide bonds link Cys-40/Cys-63, Cys-49/Cys-68, and Cys-53/Cys-70.

Belongs to the long (3 C-C) scorpion toxin superfamily. Expressed by the venom gland.

It is found in the secreted. Functionally, probable neurotoxin that inhibits ion channels. In Androctonus australis (Sahara scorpion), this protein is Toxin-like peptide AaF1CA7.